The chain runs to 389 residues: Ecto-ADP-ribosyltransferase 3 (389 aa).

The signal sequence occupies residues 1 to 26 (MKTGHFEIVTMLLATMILVDIFQVKA). Residues cysteine 43 and cysteine 256 are joined by a disulfide bond. The 188-residue stretch at 64 to 251 (QQLDTVWENA…LILQSINKTC (188 aa)) folds into the TR mART core domain. Residues tyrosine 101 and arginine 163 each contribute to the NAD(+) site. N-linked (GlcNAc...) asparagine glycosylation is present at asparagine 248. Repeat copies occupy residues 283–292 (GEKNQKLEDH), 293–302 (SEKNWKLEDH), and 303–312 (GEKNQKLEDH). Residues 283 to 312 (GEKNQKLEDHSEKNWKLEDHGEKNQKLEDH) form a 3 X 10 AA tandem repeats of [GS]-E-K-N-[QW]-K-L-E-D-H region. The interval 325 to 362 (MKIPEPFPLPEDKSQGNINNPTPGPVPVPGPKSHPSAS) is disordered. O-linked (GalNAc...) threonine glycosylation occurs at threonine 346. Over residues 346–356 (TPGPVPVPGPK) the composition is skewed to pro residues. Residue serine 362 is the site of GPI-anchor amidated serine attachment. The propeptide at 363–389 (SGKLLLPQFGMVIILISVSAINLFVAL) is removed in mature form.

It belongs to the Arg-specific ADP-ribosyltransferase family. O-glycosylated with core 1 or possibly core 8 glycans. Testis specific.

Its subcellular location is the cell membrane. It carries out the reaction L-arginyl-[protein] + NAD(+) = N(omega)-(ADP-D-ribosyl)-L-arginyl-[protein] + nicotinamide + H(+). The polypeptide is Ecto-ADP-ribosyltransferase 3 (ART3) (Homo sapiens (Human)).